The following is a 474-amino-acid chain: Glutathione synthetase (474 aa).

Residue Arg-125 participates in substrate binding. Glu-144 provides a ligand contact to ATP. The Mg(2+) site is built by Glu-144 and Asn-146. Substrate is bound by residues 148-151 (IAAS), 214-216 (QRN), Gln-220, and 267-270 (RTGY). Residues Lys-305, 364-373 (KPQREGGGNN), Tyr-375, 398-401 (MDKI), and Glu-425 contribute to the ATP site. Glu-368 is a binding site for Mg(2+). Residue Arg-450 coordinates substrate. Residues Lys-452 and Asp-458 each coordinate ATP. Position 461–462 (461–462 (VA)) interacts with substrate.

The protein belongs to the eukaryotic GSH synthase family. Homodimer. The cofactor is Mg(2+). As to expression, expressed ubiquitously.

It catalyses the reaction gamma-L-glutamyl-L-cysteine + glycine + ATP = glutathione + ADP + phosphate + H(+). It carries out the reaction gamma-L-glutamyl-(2S)-2-aminobutanoate + glycine + ATP = ophthalmate + ADP + phosphate + H(+). It participates in sulfur metabolism; glutathione biosynthesis; glutathione from L-cysteine and L-glutamate: step 2/2. Its function is as follows. Catalyzes the production of glutathione from gamma-glutamylcysteine and glycine in an ATP-dependent manner. Glutathione (gamma-glutamylcysteinylglycine, GSH) is the most abundant intracellular thiol in living aerobic cells and is required for numerous processes including the protection of cells against oxidative damage, amino acid transport, the detoxification of foreign compounds, the maintenance of protein sulfhydryl groups in a reduced state and acts as a cofactor for a number of enzymes. Participates in ophthalmate biosynthesis in hepatocytes. The protein is Glutathione synthetase of Xenopus laevis (African clawed frog).